We begin with the raw amino-acid sequence, 326 residues long: Glycerol-3-phosphate dehydrogenase [NAD(P)+] (326 aa).

NADPH is bound by residues Trp-15, Arg-35, and Lys-107. Sn-glycerol 3-phosphate-binding residues include Lys-107, Gly-135, and Ser-137. NADPH is bound at residue Ala-139. Sn-glycerol 3-phosphate-binding residues include Lys-190, Asp-243, Ser-253, Arg-254, and Asn-255. The active-site Proton acceptor is Lys-190. Arg-254 is a binding site for NADPH. NADPH is bound by residues Leu-273 and Glu-275.

It belongs to the NAD-dependent glycerol-3-phosphate dehydrogenase family.

It is found in the cytoplasm. It catalyses the reaction sn-glycerol 3-phosphate + NAD(+) = dihydroxyacetone phosphate + NADH + H(+). The enzyme catalyses sn-glycerol 3-phosphate + NADP(+) = dihydroxyacetone phosphate + NADPH + H(+). It participates in membrane lipid metabolism; glycerophospholipid metabolism. In terms of biological role, catalyzes the reduction of the glycolytic intermediate dihydroxyacetone phosphate (DHAP) to sn-glycerol 3-phosphate (G3P), the key precursor for phospholipid synthesis. The sequence is that of Glycerol-3-phosphate dehydrogenase [NAD(P)+] from Bradyrhizobium diazoefficiens (strain JCM 10833 / BCRC 13528 / IAM 13628 / NBRC 14792 / USDA 110).